We begin with the raw amino-acid sequence, 89 residues long: Small ribosomal subunit protein uS15 (89 aa).

Belongs to the universal ribosomal protein uS15 family. As to quaternary structure, part of the 30S ribosomal subunit. Forms a bridge to the 50S subunit in the 70S ribosome, contacting the 23S rRNA.

Its function is as follows. One of the primary rRNA binding proteins, it binds directly to 16S rRNA where it helps nucleate assembly of the platform of the 30S subunit by binding and bridging several RNA helices of the 16S rRNA. In terms of biological role, forms an intersubunit bridge (bridge B4) with the 23S rRNA of the 50S subunit in the ribosome. The sequence is that of Small ribosomal subunit protein uS15 from Gluconobacter oxydans (strain 621H) (Gluconobacter suboxydans).